A 471-amino-acid chain; its full sequence is Bifunctional protein GlmU (471 aa).

The interval 1–235 (MVAVAILAAG…YQEIFGINNR (235 aa)) is pyrophosphorylase. UDP-N-acetyl-alpha-D-glucosamine-binding positions include 7–10 (LAAG), Lys21, Gln82, and 87–88 (GT). Mg(2+) is bound at residue Asp112. UDP-N-acetyl-alpha-D-glucosamine is bound by residues Gly149, Glu164, Asn179, and Asn233. Asn233 contacts Mg(2+). Positions 236 to 256 (KHLAKAHEILQVRVKDDWMEA) are linker. Positions 257–471 (GVTLIDPDSI…SKKEENKSSP (215 aa)) are N-acetyltransferase. Residues Arg338 and Lys356 each contribute to the UDP-N-acetyl-alpha-D-glucosamine site. The active-site Proton acceptor is the His368. Tyr371 and Asn382 together coordinate UDP-N-acetyl-alpha-D-glucosamine. Acetyl-CoA is bound by residues Ala385, 391 to 392 (NY), Ser410, Ala428, and Arg445.

This sequence in the N-terminal section; belongs to the N-acetylglucosamine-1-phosphate uridyltransferase family. In the C-terminal section; belongs to the transferase hexapeptide repeat family. In terms of assembly, homotrimer. It depends on Mg(2+) as a cofactor.

It is found in the cytoplasm. The enzyme catalyses alpha-D-glucosamine 1-phosphate + acetyl-CoA = N-acetyl-alpha-D-glucosamine 1-phosphate + CoA + H(+). It carries out the reaction N-acetyl-alpha-D-glucosamine 1-phosphate + UTP + H(+) = UDP-N-acetyl-alpha-D-glucosamine + diphosphate. Its pathway is nucleotide-sugar biosynthesis; UDP-N-acetyl-alpha-D-glucosamine biosynthesis; N-acetyl-alpha-D-glucosamine 1-phosphate from alpha-D-glucosamine 6-phosphate (route II): step 2/2. It functions in the pathway nucleotide-sugar biosynthesis; UDP-N-acetyl-alpha-D-glucosamine biosynthesis; UDP-N-acetyl-alpha-D-glucosamine from N-acetyl-alpha-D-glucosamine 1-phosphate: step 1/1. It participates in bacterial outer membrane biogenesis; LPS lipid A biosynthesis. In terms of biological role, catalyzes the last two sequential reactions in the de novo biosynthetic pathway for UDP-N-acetylglucosamine (UDP-GlcNAc). The C-terminal domain catalyzes the transfer of acetyl group from acetyl coenzyme A to glucosamine-1-phosphate (GlcN-1-P) to produce N-acetylglucosamine-1-phosphate (GlcNAc-1-P), which is converted into UDP-GlcNAc by the transfer of uridine 5-monophosphate (from uridine 5-triphosphate), a reaction catalyzed by the N-terminal domain. The sequence is that of Bifunctional protein GlmU from Trichodesmium erythraeum (strain IMS101).